The following is a 310-amino-acid chain: E3 ubiquitin-protein ligase AIP2 (310 aa).

The RING-type; atypical zinc-finger motif lies at 230–271 (CCICKENLVIGDKMQELPCKHTFHPPCLKPWLDEHNSCPICR). Positions 276 to 306 (TDDQKYENWKEREKEAEEERKGAENAVRGGE) form a coiled coil. Residues 285–298 (KEREKEAEEERKGA) show a composition bias toward basic and acidic residues. Positions 285 to 310 (KEREKEAEEERKGAENAVRGGEYMYV) are disordered.

As to quaternary structure, interacts with ABI3 (via C-terminus). In terms of processing, auto-ubiquitinated. In terms of tissue distribution, highly expressed in leaves and at lower levels in flowers and seeds.

Its subcellular location is the nucleus. The protein resides in the cytoplasm. It catalyses the reaction S-ubiquitinyl-[E2 ubiquitin-conjugating enzyme]-L-cysteine + [acceptor protein]-L-lysine = [E2 ubiquitin-conjugating enzyme]-L-cysteine + N(6)-ubiquitinyl-[acceptor protein]-L-lysine.. It participates in protein modification; protein ubiquitination. Its function is as follows. E3 ubiquitin-protein ligase that acts as a negative regulator of abscisic acid (ABA) signaling. Mediates ubiquitination and subsequent proteasomal degradation of the transcription factor ABI3. This is E3 ubiquitin-protein ligase AIP2 (AIP2) from Arabidopsis thaliana (Mouse-ear cress).